The primary structure comprises 390 residues: S-adenosylmethionine synthase 3 (390 aa).

Glutamate 9 contacts Mg(2+). Histidine 15 is an ATP binding site. Glutamate 43 is a binding site for K(+). L-methionine is bound by residues glutamate 56 and glutamine 99. ATP contacts are provided by residues 167–169, 235–238, aspartate 246, 252–253, alanine 269, lysine 273, and lysine 277; these read DGK, SGRF, and RK. Residue aspartate 246 participates in L-methionine binding. Lysine 277 contributes to the L-methionine binding site.

The protein belongs to the AdoMet synthase family. Homotetramer. Interacts with GRF3. It depends on Mn(2+) as a cofactor. Requires Mg(2+) as cofactor. The cofactor is Co(2+). K(+) serves as cofactor.

Its subcellular location is the cytoplasm. It catalyses the reaction L-methionine + ATP + H2O = S-adenosyl-L-methionine + phosphate + diphosphate. It functions in the pathway amino-acid biosynthesis; S-adenosyl-L-methionine biosynthesis; S-adenosyl-L-methionine from L-methionine: step 1/1. Its activity is regulated as follows. Inhibited by 5,5'-dithiobis-2-nitrobenzoic acid (DTNB) and N-ethylmaleimide (NEM) (in vitro). Catalyzes the formation of S-adenosylmethionine from methionine and ATP. The reaction comprises two steps that are both catalyzed by the same enzyme: formation of S-adenosylmethionine (AdoMet) and triphosphate, and subsequent hydrolysis of the triphosphate. Involved in the biosynthesis of lignin. This chain is S-adenosylmethionine synthase 3 (METK3), found in Arabidopsis thaliana (Mouse-ear cress).